We begin with the raw amino-acid sequence, 292 residues long: S-adenosyl-L-methionine-dependent Diels-Alderase iccD (292 aa).

The chain crosses the membrane as a helical span at residues 240–262 (LPVVRMFYVVLLVPYLFVRLLGI).

Belongs to the class I-like SAM-binding methyltransferase superfamily. Erg6/SMT family. Requires S-adenosyl-L-methionine as cofactor.

Its subcellular location is the membrane. The catalysed reaction is 3-[(2E,4E,8S,10E,12Z)-4,8-dimethyltetradeca-2,4,10,12-tetraenoyl]-4-hydroxy-5-(4-hydroxyphenyl)-1,2-dihydropyridin-2-one = 8-epi-ilicicolin H. It functions in the pathway mycotoxin biosynthesis. In terms of biological role, S-adenosyl-l-methionine-dependent Diels-Alderase; part of the gene cluster that mediates the biosynthesis of ilicicolin H, a 4-hydroxy-2-pyridonealkaloid that has potent and broad antifungal activities by inhibiting the mitochondrial respiration chain. IccD catalyzes the Diels-Alder reaction that converts the acyclic 2-pyridone intermediate to 8-epi-ilicicolin H. The biosynthesis of ilicicolin H starts with formation of the tetramic acid by the hybrid PKS-NRPS synthetase iccA with the partnering trans-enoyl reductase iccB since iccA lacks a designated enoylreductase (ER) domain. The cytochrome P450 monooxygenase iccC then catalyzes the ring expansion of the tetramate to the acyclic 2-pyridone. The pericyclase iccD further converts the acyclic 2-pyridone into 8-epi-ilicicolin H. Finally, the epimerase iccE converts 8-epi-ilicicolin H into ilicicolin H via epimerization. IccA to iccE are sufficient for ilicicolin H biosynthesis and the roles of the remaining enzymes, iccF, iccG and iccH within the pathway have still to be determined. The polypeptide is S-adenosyl-L-methionine-dependent Diels-Alderase iccD (Talaromyces variabilis (Penicillium variabile)).